Reading from the N-terminus, the 285-residue chain is MRWLLPLFRTVTLAVVRVRRGVCGLGMFYAVRRGRRTGVFLSWSECKAQVDRFPAARFKKFATEDEAWAFVRSSSSPDGSKGQESAHVQKLQVKTSKRPREPLGEEEEPPEPGAKHTRQDTEPAALVSKDAFSYMGESVVVYTDGCCSSNGRKRARAGIGVYWGPGHPLNVGIRLPGRQTNQRAEIHAACKAITQAKAQNISKLVLYTDSMFTINGITNWVQGWKKNGWRTSTGKDVINKEDFMELDELTQGMDIQWMHIPGHSGFVGNEEADRLAREGAKQSEG.

The disordered stretch occupies residues 72–122 (RSSSSPDGSKGQESAHVQKLQVKTSKRPREPLGEEEEPPEPGAKHTRQDTE). Residues 135 to 281 (MGESVVVYTD…ADRLAREGAK (147 aa)) form the RNase H type-1 domain. Mg(2+) contacts are provided by D144, E185, D209, and D273.

It belongs to the RNase H family. As to quaternary structure, monomer. Mg(2+) serves as cofactor.

The protein resides in the cytoplasm. The enzyme catalyses Endonucleolytic cleavage to 5'-phosphomonoester.. With respect to regulation, in the presence of magnesium, manganese is inhibitory. Endonuclease that specifically degrades the RNA of RNA-DNA hybrids. Plays a role in RNA polymerase II (RNAp II) transcription termination by degrading R-loop RNA-DNA hybrid formation at G-rich pause sites located downstream of the poly(A) site and behind the elongating RNAp II. This chain is Ribonuclease H1 (Rnaseh1), found in Rattus norvegicus (Rat).